Here is a 291-residue protein sequence, read N- to C-terminus: B-lymphocyte antigen CD20 (291 aa).

Residues Met1–Ala44 are Cytoplasmic-facing. Position 29 is a phosphoserine (Ser29). The chain crosses the membrane as a helical span at residues Leu45–Ile65. Residues Pro66–Gly68 lie on the Extracellular side of the membrane. Residues Val69 to Ile89 form a helical membrane-spanning segment. Over Ser90–Val111 the chain is Cytoplasmic. The chain crosses the membrane as a helical span at residues Ile112–Ile132. Residues Leu133–Ser182 lie on the Extracellular side of the membrane. A helical transmembrane segment spans residues Val183–Ala203. The Cytoplasmic segment spans residues Gly204–Pro291. Cys214 carries S-palmitoyl cysteine lipidation. Ser219 carries the post-translational modification Phosphoserine. Thr233 bears the Phosphothreonine mark. The span at Val261–Glu270 shows a compositional bias: acidic residues. The tract at residues Val261–Pro291 is disordered.

This sequence belongs to the MS4A family. As to quaternary structure, forms homotetramers. Interacts with the heavy and light chains of cell surface IgM, the antigen-binding components of the BCR. Post-translationally, phosphorylated.

The protein localises to the cell membrane. Its function is as follows. B-lymphocyte-specific membrane protein that plays a role in the regulation of cellular calcium influx necessary for the development, differentiation, and activation of B-lymphocytes. Functions as a store-operated calcium (SOC) channel component promoting calcium influx after activation by the B-cell receptor/BCR. This is B-lymphocyte antigen CD20 (Ms4a1) from Mus musculus (Mouse).